A 403-amino-acid polypeptide reads, in one-letter code: PP2A regulatory subunit TAP46 (403 aa).

Disordered regions lie at residues 158–184 and 351–403; these read ERRG…LDDD and ANSS…TPCG. Acidic residues-rich tracts occupy residues 174–184 and 366–375; these read ETEEDDVLDDD and EDDEEDDDDA. The segment covering 376–391 has biased composition (basic and acidic residues); that stretch reads AQDKARAWDDWKDDNP.

This sequence belongs to the IGBP1/TAP42 family. As to quaternary structure, interacts with NPP4 and NPP5, two catalytic subunits (subunit C) of PP2A.

The protein resides in the cytoplasm. The protein localises to the nucleus. Involved in the regulation of the TOR signaling pathway. Seems to act as a regulator of PP2A catalytic activity. The polypeptide is PP2A regulatory subunit TAP46 (Nicotiana benthamiana).